The primary structure comprises 58 residues: Large ribosomal subunit protein uL30 (58 aa).

It belongs to the universal ribosomal protein uL30 family. Part of the 50S ribosomal subunit.

The polypeptide is Large ribosomal subunit protein uL30 (Pseudomonas putida (strain ATCC 700007 / DSM 6899 / JCM 31910 / BCRC 17059 / LMG 24140 / F1)).